A 449-amino-acid chain; its full sequence is L10-interacting MYB domain-containing protein (449 aa).

The 64-residue stretch at 162-225 (SNPQTKGYWS…YTRPQLKNHW (64 aa)) folds into the Myb-like domain. The tract at residues 297–324 (TYTPPSRSRKKLLHNRSESPQWRDTTPL) is disordered. Polar residues predominate over residues 314–324 (ESPQWRDTTPL).

Interacts with RPL10A. As to expression, expressed in seedlings, leaves, roots, stems and flowers.

Its subcellular location is the nucleus. In terms of biological role, transcriptional repressor that associates with ribosomal protein promoters. The protein is L10-interacting MYB domain-containing protein of Arabidopsis thaliana (Mouse-ear cress).